The following is a 500-amino-acid chain: NAD(P)H-quinone oxidoreductase chain 4, chloroplastic (500 aa).

Helical transmembrane passes span 3–23 (FFPW…IILF), 37–57 (ICIC…HFQL), 87–107 (IGPI…AWPV), 113–130 (LFHF…GLFA), 134–154 (LLLF…LLSM), 167–187 (FILY…GVGL), 208–228 (ALEI…SPII), 242–262 (HYST…YGLI), 272–292 (AHSI…IYAA), 305–325 (IAYS…SIND), 330–350 (GAIL…FLAG), 364–384 (MGGI…FSMA), 386–406 (LALP…GIIT), 411–431 (LLIS…LTPI), and 462–482 (LFVS…PDFV).

Belongs to the complex I subunit 4 family.

It is found in the plastid. It localises to the chloroplast thylakoid membrane. It catalyses the reaction a plastoquinone + NADH + (n+1) H(+)(in) = a plastoquinol + NAD(+) + n H(+)(out). The enzyme catalyses a plastoquinone + NADPH + (n+1) H(+)(in) = a plastoquinol + NADP(+) + n H(+)(out). The polypeptide is NAD(P)H-quinone oxidoreductase chain 4, chloroplastic (Daucus carota (Wild carrot)).